The following is an 84-amino-acid chain: UPF0410 protein YmgE (84 aa).

3 consecutive transmembrane segments (helical) span residues 1-21 (MGIIAWIIFGLIAGIIAKLIM), 27-47 (GGFFLTCILGIVGAVVGGWLA), and 58-78 (GFNLHSFLVAVVGAILVLGVF).

The protein belongs to the UPF0410 family.

It is found in the cell inner membrane. The polypeptide is UPF0410 protein YmgE (ymgE) (Escherichia coli O127:H6 (strain E2348/69 / EPEC)).